A 1605-amino-acid chain; its full sequence is MQHQSLSVRNSSGISGNRDENFPSVRSSKVTVKTASISAKMAPHTQGSNLTIKQQYQPHQWPWNTSNNTNATNSNNVQSNNNSSTATSNSSTNSNNSPAVNTPTTQNQSQPTTQQSNTALVAAAAAGTLSVTAVNKLKRLQPTTHSEASTNTRSNSTNTIASGAKRIRTTNVEKVNKSVGTNTTGLSGPPGLVAVGSSLTTSAANATTTKKLTQMAIVAASNTSHHHQQISTAGTTTTTITKNAKNFTASGNADLCNANKITAGRATTLKTTTASSTTTATAEAEAEITTTTELMTTTSTVLQQKSIIKTGPVKTSNAASLEKYLNLLQQQQATSITPATTLKKVERKTARIAPTVSLTRKVSHSPQGGLGVGQPKKPVTIAPRTSDPKLSINYNQQMVATTATSAISTGNQLIKQQDQQLVKSPQSTVLLTTIRIPQQQQQHQQSTQTQQQTSQNQSQPQQNQTQAQLQAQQQFKQVVQQQLQLSSPPRTPTKLGSAVFQFHPQTTTVMPNLVQIPNLVPTQPVSSAAAKLNAPVVASSTTSSPTTANLVMNNATHGLTATRLNNGTTQLYMNGAVIKLHQIQQQQQQAIGTAGQQAPTPQQSLPMDSATVSMGLNGLLTKSATLSTAASTISTNQPAHQAKAFTLHAQKPTQLYQQANTSTATAYTPQPFFMAPSGQILLNTAALPTMLTSASLQQALVQAAQANIPALHPLQPSQPQSTQLPNITAIIQQQQQQQQQQQMLPNFHQLLANIPQAVLQNLQSTTKLGQTPQFVPIPSNLFLNPQNPVYTSSPSSSSFTSPITISTSTLPSGSTTISQPLSPPPLVATVPTYTTTAKPIMNTLNNQKIIIASATSTTSSKPPPPIKPISSTEPPKLVPVQLNKPSISITPVISNPPKLVPPSAPVPKLVLSASVATKATSTTPIKDKPKPNLPMSEPPALAPASCTPPLLTAPAPLPVASVPSPVLSPRAIDNKSPPALNPLSLDCGSSNDSGIVANSSDTEDKSLTIDLCSPGSPDSTPQKKDEESRQESTPSPVPSPSPLSEPPVIPAESEPEPEPEPELEPEPEMEPEPETEPEPEVEPEPEDEPHLEEPKIDESSEAVELPELEDPQPSPPLPCELPPPPTIETDLLDTLSLPPSQKSPKSLLLEQIKLKLPDQPDDQPQESMSSDQDYSNQSPLDESSPTGSAEPSESQRSTTPVDMSPPSIETDFLNTPQMTESAKSPILSQPKTIRFPAQNGVHHNFGRKGFRRLSDGRLFGVCYWSNCDAQFDTSSKLLDHLQIQHVNTQTGPFACLWDGCKVHNKESCSRRWLERHVLSHGGSKPHKCIVAGCGMRFGSQLALEKHVNHHFNNTDNASAGKRSSDPPLPKVLRKTGKKLRYRRQPWSARRFDFFDIGVMEGLQHRLIMAGSVASARRGTVTFRGQAAGRRVTGFGAEVFVKWYPREIISDDWIPEAEVTSTREISIYELNPDQRFELEAQLKTNRKANAELLFCLHELNLKLQAEASSTSCSRSSFSSSSSSSSSSGCSSASSSLISTPIPFNSRTEPKKLRKPPKQSYQPSSSGTTSSLSSVLSSSASSLLSNENSSSSSSSSSSSSSSSSSTS.

Residues 1–15 (MQHQSLSVRNSSGIS) show a composition bias toward polar residues. Disordered stretches follow at residues 1-28 (MQHQSLSVRNSSGISGNRDENFPSVRSS), 60-117 (QWPW…QQSN), 359-388 (TRKVSHSPQGGLGVGQPKKPVTIAPRTSDP), 441-468 (QQHQQSTQTQQQTSQNQSQPQQNQTQAQ), 856-877 (STTSSKPPPPIKPISSTEPPKL), 917-947 (TKATSTTPIKDKPKPNLPMSEPPALAPASCT), and 991-1213 (NDSG…TDFL). Low complexity predominate over residues 64–117 (NTSNNTNATNSNNVQSNNNSSTATSNSSTNSNNSPAVNTPTTQNQSQPTTQQSN). Positions 991–1000 (NDSGIVANSS) are enriched in polar residues. The segment covering 1021–1030 (PQKKDEESRQ) has biased composition (basic and acidic residues). Residues 1035 to 1049 (SPVPSPSPLSEPPVI) show a composition bias toward pro residues. Composition is skewed to acidic residues over residues 1053-1090 (SEPEPEPEPELEPEPEMEPEPETEPEPEVEPEPEDEPH) and 1099-1110 (SSEAVELPELED). Residues 1112–1126 (QPSPPLPCELPPPPT) are compositionally biased toward pro residues. The span at 1135–1149 (LSLPPSQKSPKSLLL) shows a compositional bias: low complexity. Positions 1165 to 1201 (QESMSSDQDYSNQSPLDESSPTGSAEPSESQRSTTPV) are enriched in polar residues. A C2H2-type 1 zinc finger spans residues 1260–1285 (GVCYWSNCDAQFDTSSKLLDHLQIQH). The C2H2-type 2; degenerate zinc finger occupies 1293–1320 (FACLWDGCKVHNKESCSRRWLERHVLSH). Residues 1326–1350 (HKCIVAGCGMRFGSQLALEKHVNHH) form a C2H2-type 3 zinc finger. 2 disordered regions span residues 1352-1371 (NNTDNASAGKRSSDPPLPKV) and 1511-1605 (CSRS…SSTS). Composition is skewed to low complexity over residues 1511-1537 (CSRSSFSSSSSSSSSSGCSSASSSLIS) and 1556-1605 (KQSY…SSTS).

This sequence belongs to the AEBP2/jing C2H2-type zinc-finger family.

The protein localises to the nucleus. Its function is as follows. May functionally interact with Polycomb group (PcG) and trithorax group (trxG) proteins to repress transcription. The polypeptide is Zinc finger protein jing homolog (Aedes aegypti (Yellowfever mosquito)).